The primary structure comprises 396 residues: MIRRLAAFSALSGLATAWLPEVNKKITSTNGTNLFTSSNGKIRGVNLGSQFVFEPWIAEKAWSDMGCGGQKSEFDCVSRLGQANANSAFASHWGSWITQDDIAEMVSYGLNTIRVPVGYWMREDLVYSDSEHFPQGGLQYLENLCEWASDAGLYIIIDLHGAPGAQTPQNPFTGQYAPIAGFYQDYQFERALKFLEWMTTNIHQNDKFRNVGMLEVVNEPVQDAGKVGSMRSSYYPNAFKRIRAAEQSLNIDRNNYLHIQMMDRLWGSGDPNESLTDTYYAAYDDHRYLKWASVAVSKDSYISTSCSDQLNSNTPTIVGEWSLSVPDNVQWNSDWSPDSNKDFYKKWFAAQVTAYERQQGWIFWTWKAQLGDYRWSYQGGLLLTRPGIGDQQVLTL.

Positions 1-17 are cleaved as a signal peptide; it reads MIRRLAAFSALSGLATA. N-linked (GlcNAc...) asparagine glycosylation is present at asparagine 30. Glutamate 219 acts as the Proton donor in catalysis. An N-linked (GlcNAc...) asparagine glycan is attached at asparagine 272. Catalysis depends on glutamate 320, which acts as the Nucleophile.

The protein belongs to the glycosyl hydrolase 5 (cellulase A) family.

It is found in the secreted. The enzyme catalyses Random hydrolysis of (1-&gt;6)-linkages in (1-&gt;6)-beta-D-glucans.. Functionally, beta-glucanases participate in the metabolism of beta-glucan, the main structural component of the cell wall. Acts on lutean, pustulan and 1,6-oligo-beta-D-glucosides. In Aspergillus fumigatus (strain CBS 144.89 / FGSC A1163 / CEA10) (Neosartorya fumigata), this protein is Probable glucan endo-1,6-beta-glucosidase B (exgB).